Consider the following 239-residue polypeptide: Uridylate kinase (239 aa).

13-16 (KVSG) lines the ATP pocket. Gly55 lines the UMP pocket. Positions 56 and 60 each coordinate ATP. UMP contacts are provided by residues Asp75 and 136–143 (TGNPFFTT). Residues Thr163, Gln164, Tyr169, and Asp172 each coordinate ATP.

The protein belongs to the UMP kinase family. In terms of assembly, homohexamer.

It is found in the cytoplasm. It catalyses the reaction UMP + ATP = UDP + ADP. It functions in the pathway pyrimidine metabolism; CTP biosynthesis via de novo pathway; UDP from UMP (UMPK route): step 1/1. With respect to regulation, inhibited by UTP. Its function is as follows. Catalyzes the reversible phosphorylation of UMP to UDP. The polypeptide is Uridylate kinase (Bartonella henselae (strain ATCC 49882 / DSM 28221 / CCUG 30454 / Houston 1) (Rochalimaea henselae)).